A 555-amino-acid chain; its full sequence is Formate--tetrahydrofolate ligase (555 aa).

Position 65-72 (65-72 (TPAGEGKS)) interacts with ATP.

The protein belongs to the formate--tetrahydrofolate ligase family.

The enzyme catalyses (6S)-5,6,7,8-tetrahydrofolate + formate + ATP = (6R)-10-formyltetrahydrofolate + ADP + phosphate. The protein operates within one-carbon metabolism; tetrahydrofolate interconversion. This Staphylococcus aureus (strain COL) protein is Formate--tetrahydrofolate ligase.